The sequence spans 1813 residues: Sucrase-isomaltase, intestinal (1813 aa).

At methionine 1–threonine 12 the chain is on the cytoplasmic side. Position 7 is a phosphoserine; by PKA (serine 7). A helical; Signal-anchor for type II membrane protein transmembrane segment spans residues leucine 13–proline 32. Topologically, residues threonine 33–threonine 1813 are lumenal. Positions glycine 46–asparagine 95 constitute a P-type 1 domain. 3 disulfides stabilise this stretch: cysteine 48/cysteine 79, cysteine 62/cysteine 78, and cysteine 73/cysteine 91. The tract at residues asparagine 95–arginine 991 is isomaltase. N-linked (GlcNAc...) asparagine glycosylation is present at asparagine 127. Residues aspartate 250 and aspartate 374 each contribute to the substrate site. Residue tyrosine 377 is modified to Sulfotyrosine. N-linked (GlcNAc...) asparagine glycosylation occurs at asparagine 388. Residue aspartate 491 is the Nucleophile; for isomaltase activity of the active site. A disulfide bridge links cysteine 506 with cysteine 531. Substrate is bound at residue arginine 574. Catalysis depends on aspartate 590, which acts as the For isomaltase activity. Cysteine 621 and cysteine 632 are joined by a disulfide. Residue histidine 648 participates in substrate binding. N-linked (GlcNAc...) asparagine glycosylation is found at asparagine 669, asparagine 791, asparagine 896, and asparagine 911. One can recognise a P-type 2 domain in the interval asparagine 917–lysine 962. The tract at residues isoleucine 992 to threonine 1813 is sucrase. 2 N-linked (GlcNAc...) asparagine glycosylation sites follow: asparagine 1221 and asparagine 1289. Tyrosine 1294 bears the Sulfotyrosine mark. N-linked (GlcNAc...) asparagine glycosylation is found at asparagine 1326 and asparagine 1340. 2 positions are modified to sulfotyrosine: tyrosine 1368 and tyrosine 1371. Catalysis depends on aspartate 1380, which acts as the Nucleophile; for sucrase activity. Glutamate 1383 acts as the For sucrase activity in catalysis. N-linked (GlcNAc...) asparagine glycosylation is present at asparagine 1432. The Proton donor; for sucrase activity role is filled by aspartate 1486. 5 N-linked (GlcNAc...) asparagine glycosylation sites follow: asparagine 1521, asparagine 1545, asparagine 1558, asparagine 1703, and asparagine 1772.

This sequence belongs to the glycosyl hydrolase 31 family. In terms of assembly, the resulting sucrase and isomaltase subunits stay associated with one another in a complex by non-covalent linkages. Post-translationally, the precursor is proteolytically cleaved when exposed to pancreatic proteases in the intestinal lumen. Sulfated.

The protein localises to the apical cell membrane. The enzyme catalyses Hydrolysis of sucrose and maltose by an alpha-D-glucosidase-type action.. The catalysed reaction is Hydrolysis of (1-&gt;6)-alpha-D-glucosidic linkages in some oligosaccharides produced from starch and glycogen by alpha-amylase, and in isomaltose.. Its function is as follows. Plays an important role in the final stage of carbohydrate digestion. Isomaltase activity is specific for both alpha-1,4- and alpha-1,6-oligosaccharides. This chain is Sucrase-isomaltase, intestinal (SI), found in Suncus murinus (Asian house shrew).